A 362-amino-acid polypeptide reads, in one-letter code: 2-aminoethylphosphonate--pyruvate transaminase (362 aa).

Lysine 193 bears the N6-(pyridoxal phosphate)lysine mark.

Belongs to the class-V pyridoxal-phosphate-dependent aminotransferase family. PhnW subfamily. Homodimer. Requires pyridoxal 5'-phosphate as cofactor.

It carries out the reaction (2-aminoethyl)phosphonate + pyruvate = phosphonoacetaldehyde + L-alanine. Involved in phosphonate degradation. The protein is 2-aminoethylphosphonate--pyruvate transaminase of Bacteroides fragilis (strain ATCC 25285 / DSM 2151 / CCUG 4856 / JCM 11019 / LMG 10263 / NCTC 9343 / Onslow / VPI 2553 / EN-2).